We begin with the raw amino-acid sequence, 265 residues long: Leucine-rich repeat-containing protein Bf66946 (265 aa).

Positions 1–20 (MALRDIFLLSMAMTAVTVQA) are cleaved as a signal peptide. Intrachain disulfides connect Cys21/Cys27 and Cys25/Cys39. One can recognise an LRRNT domain in the interval 21-50 (CPSACKCTVSLYGEMVVACGGMGLTEIPED). LRR repeat units lie at residues 51–75 (IPHR…SFKG), 76–99 (LRNL…ALRH), and 100–123 (LGHL…LFDF). A glycan (N-linked (GlcNAc...) asparagine) is linked at Asn64. One can recognise an LRRCT domain in the interval 142–193 (NPWGCDCRMAWLAQELAGGSKTFGDRHMECATPAALAGRGLSEIPQTSFVCT). Cystine bridges form between Cys146–Cys171 and Cys148–Cys192. A helical transmembrane segment spans residues 220–240 (VAVVFGCITGLVTILLLVLTA).

It is found in the cell membrane. Binds selectively to the Gram-positive bacteria S.aureus and S.pneumoniae. Does not adhere to the Gram-negative bacteria E.coli and S.enterica. Probably recognizes peptidoglycans expressed on the bacterial cell surface. This chain is Leucine-rich repeat-containing protein Bf66946, found in Branchiostoma floridae (Florida lancelet).